A 101-amino-acid chain; its full sequence is Small ribosomal subunit protein uS14 (101 aa).

Belongs to the universal ribosomal protein uS14 family. In terms of assembly, part of the 30S ribosomal subunit. Contacts proteins S3 and S10.

Binds 16S rRNA, required for the assembly of 30S particles and may also be responsible for determining the conformation of the 16S rRNA at the A site. The sequence is that of Small ribosomal subunit protein uS14 from Ehrlichia canis (strain Jake).